The chain runs to 2136 residues: Methylcytosine dioxygenase TET1 (2136 aa).

Basic residues-rich tracts occupy residues 1-12 (MSRSRHARPSRL) and 20-31 (KKKKNSQLRKTT). The tract at residues 1–47 (MSRSRHARPSRLVRKEDVNKKKKNSQLRKTTKGANKNVASVKTLSPG) is disordered. Polar residues predominate over residues 32–43 (KGANKNVASVKT). The interval 528 to 674 (LGIAQLSQAG…NGPKSESMDY (147 aa)) is sufficient for binding to genomic CpG islands. The segment at 584-625 (EKKKRKRCGVCEPCQQKTNCGECTYCKNRKNSHQICKKRKCE) adopts a CXXC-type zinc-finger fold. Zn(2+) is bound by residues Cys591, Cys594, Cys597, Cys603, Cys606, Cys609, Cys619, and Cys624. Basic and acidic residues-rich tracts occupy residues 712–724 (QNKK…HVKG), 732–743 (EAEKSKNSEVDK), and 849–869 (IHNE…EPKD). Disordered regions lie at residues 712–746 (QNKK…KKRT), 849–876 (IHNE…VQPS), 899–923 (QLSE…EQRT), and 1119–1169 (EKGT…VSYQ). The residue at position 871 (Ser871) is a Phosphoserine. The span at 901–911 (SEAPSENSSPS) shows a compositional bias: low complexity. A compositionally biased stretch (polar residues) spans 1119-1139 (EKGTIQQKPPSSVHNNHGSSL). The span at 1146 to 1163 (TQKKTKSTPSRDRRKKKP) shows a compositional bias: basic residues. Residues Cys1422, Cys1424, Cys1482, His1508, and Cys1510 each contribute to the Zn(2+) site. Arg1551 is a binding site for 2-oxoglutarate. Zn(2+) contacts are provided by Cys1561, Cys1563, Cys1579, and Cys1588. The interval 1580–1593 (SWSMYFNGCKFGRS) is interaction with DNA. Lys1589 participates in a covalent cross-link: Glycyl lysine isopeptide (Lys-Gly) (interchain with G-Cter in ubiquitin). Position 1648 (Cys1648) interacts with Zn(2+). Cys1664 contacts 2-oxoglutarate. His1670 contacts Zn(2+). The Fe cation site is built by His1672 and Asp1674. Asn1677 is a binding site for substrate. Position 1706 (His1706) interacts with 2-oxoglutarate. 2 disordered regions span residues 1774 to 1897 (EKKP…AAAD) and 1919 to 1984 (EPLI…SPAE). Residues 1786–1800 (NSTTTNNSKPSSLPT) show a composition bias toward low complexity. 2 stretches are compositionally biased toward polar residues: residues 1824 to 1833 (SSDNTKTYSL) and 1937 to 1953 (HQPN…QDLA). Over residues 1957-1976 (MEEDEQHSEADEPPSDEPLS) the composition is skewed to acidic residues. His2028 serves as a coordination point for Fe cation. 2043 to 2045 (RLS) provides a ligand contact to 2-oxoglutarate. 2049-2051 (YQH) contacts substrate. His2059 contacts Zn(2+). Over residues 2074–2087 (KNKKMKASEQKDQA) the composition is skewed to basic and acidic residues. A disordered region spans residues 2074-2100 (KNKKMKASEQKDQAANEGPEQSSEVNE).

The protein belongs to the TET family. Interacts with SIN3A; recruits the transcriptional corepressor SIN3A to gene promoters. Interacts with HCFC1. Interacts (via C-terminus) with OGT. Found in a complex composed of at least SINHCAF, SIN3A, HDAC1, SAP30, RBBP4, OGT and TET1. Interacts with QSER1. Interacts with NONO (via DNA-binding domain); this interaction recruits TET1 to genomic loci. Interacts with FOXA2; this interaction may recruit TET1 to specific enhancers to preserve their unmethylated status and hence allowing gene expression. Interacts with RNF2. Directly interacts (via C-terminus) with the DCAF1 component of the CRL4(VprBP) E3 ubiquitin-protein ligase complex. In terms of assembly, interacts with UHRF1; this interaction induces the recruitment of TET1 to replicating heterochromatin. Interacts with DCAF1. Fe(2+) serves as cofactor. Requires Zn(2+) as cofactor. In terms of processing, glycosylated. Interaction with OGT leads to GlcNAcylation. Monoubiquitinated at Lys-1589 by the DCX (DDB1-CUL4-X-box) E3 ubiquitin-protein ligase complex called CRL4(VprBP) or CUL4A-RBX1-DDB1-DCAF1/VPRBP complex; this modification promotes binding to DNA. In terms of tissue distribution, expressed in fetal heart, lung and brain, and in adult skeletal muscle, thymus and ovary. Not detected in adult heart, lung or brain. Up-regulated in glioblastoma cells (at protein level). Expressed in embryonic stem cells (at protein level).

It is found in the nucleus. The protein localises to the chromosome. The catalysed reaction is a 5-methyl-2'-deoxycytidine in DNA + 2-oxoglutarate + O2 = a 5-hydroxymethyl-2'-deoxycytidine in DNA + succinate + CO2. It catalyses the reaction a 5-hydroxymethyl-2'-deoxycytidine in DNA + 2-oxoglutarate + O2 = a 5-formyl-2'-deoxycytidine in DNA + succinate + CO2 + H2O. It carries out the reaction a 5-formyl-2'-deoxycytidine in DNA + 2-oxoglutarate + O2 = a 5-carboxyl-2'-deoxycytidine in DNA + succinate + CO2 + H(+). Dioxygenase that plays a key role in active DNA demethylation, by catalyzing the sequential oxidation of the modified genomic base 5-methylcytosine (5mC) into 5-hydroxymethylcytosine (5hmC), 5-formylcytosine (5fC), and 5-carboxylcytosine (5caC). In addition to its role in DNA demethylation, plays a more general role in chromatin regulation by recruiting histone modifying protein complexes to alter histone marks and chromatin accessibility, leading to both activation and repression of gene expression. Plays therefore a role in many biological processes, including stem cell maintenance, T- and B-cell development, inflammation regulation, genomic imprinting, neural activity or DNA repair. Involved in the balance between pluripotency and lineage commitment of cells and plays a role in embryonic stem cells maintenance and inner cell mass cell specification. Together with QSER1, plays an essential role in the protection and maintenance of transcriptional and developmental programs to inhibit the binding of DNMT3A/3B and therefore de novo methylation. May play a role in pancreatic beta-cell specification during development. In this context, may function as an upstream epigenetic regulator of PAX4 presumably through direct recruitment by FOXA2 to a PAX4 enhancer to preserve its unmethylated status, thereby potentiating PAX4 expression to adopt beta-cell fate during endocrine lineage commitment. Under DNA hypomethylation conditions, such as in female meiotic germ cells, may induce epigenetic reprogramming of pericentromeric heterochromatin (PCH), the constitutive heterochromatin of pericentromeric regions. PCH forms chromocenters in the interphase nucleus and chromocenters cluster at the prophase of meiosis. In this context, may also be essential for chromocenter clustering in a catalytic activity-independent manner, possibly through the recruitment polycomb repressive complex 1 (PRC1) to the chromocenters. During embryonic development, may be required for normal meiotic progression in oocytes and meiotic gene activation. Binds preferentially to DNA containing cytidine-phosphate-guanosine (CpG) dinucleotides over CpH (H=A, T, and C), hemimethylated-CpG and hemimethylated-hydroxymethyl-CpG. In terms of biological role, dioxygenase that plays a key role in active DNA demethylation. Binds to promoters, particularly to those with high CG content. In hippocampal neurons, isoform 1 regulates the expression of a unique subset of genes compared to isoform 2, although some overlap exists between both isoforms, hence differentially regulates excitatory synaptic transmission. In hippocampal neuron cell cultures, isoform 1 controls both miniature excitatory postsynaptic current amplitude and frequency. Isoform 1 may regulate genes involved in hippocampal-dependent memory, leading to positive regulation of memory, contrary to isoform 2 that may decrease memory. Its function is as follows. Dioxygenase that plays a key role in active DNA demethylation. As isoform 1, binds to promoters, particularly to those with high CG content, however displays reduced global chromatin affinity compared with isoform 1, leading to decreased global DNA demethylation compared with isoform 1. Contrary to isoform 1, isoform 2 localizes during S phase to sites of ongoing DNA replication in heterochromatin, causing a significant de novo 5hmC formation, globally, and more so in heterochromatin, including LINE 1 interspersed DNA repeats leading to their activation. In hippocampal neurons, isoform 2 regulates the expression of a unique subset of genes compared to isoform 1, although some overlap between both isoforms, hence differentially regulates excitatory synaptic transmission. In hippocampal neuron cell cultures, isoform 2 controls miniature excitatory postsynaptic current frequency, but not amplitude. Isoform 2 may regulate genes involved in hippocampal-dependent memory, leading to negative regulation of memory, contrary to isoform 1 that may improve memory. In immature and partially differentiated gonadotrope cells, directly represses luteinizing hormone gene LHB expression and does not catalyze 5hmC at the gene promoter. This chain is Methylcytosine dioxygenase TET1, found in Homo sapiens (Human).